Reading from the N-terminus, the 331-residue chain is Phenol 2-monooxygenase, oxygenase component DmpL (331 aa).

It belongs to the TmoE/XamoE family. The multicomponent enzyme phenol hydroxylase is formed by DmpL (P1 component), DmpM (P2 component), DmpN (P3 component), DmpO (P4 component) and DmpP (P5 component). The oxygenase component is a dimer composed of three subunits, DmpL, DmpN and DmpO (DmpLNO). DmpL interacts with the auxiliary protein DmpK (P0 component).

The enzyme catalyses phenol + NADH + O2 + H(+) = catechol + NAD(+) + H2O. The protein operates within aromatic compound metabolism; phenol degradation. Requires DmpM for efficient turnover. The activity of DmpLNO oxygenase is inhibited by dithiothreitol (DTT) by a mechanism apparently involving H(2)O(2) generation. In terms of biological role, part of a multicomponent enzyme which catalyzes the degradation of phenol and some of its methylated derivatives. DmpL, DmpN and DmpO form the oxygenase component of the complex. Required for growth on phenol and for in vitro phenol hydroxylase activity. This Pseudomonas sp. (strain CF600) protein is Phenol 2-monooxygenase, oxygenase component DmpL.